Reading from the N-terminus, the 484-residue chain is Nuclear rim protein 1 (484 aa).

S3 is modified (phosphoserine). 2 helical membrane passes run 145-165 (FTIF…MFGY) and 252-272 (TAIV…AIVF). Residues 416–457 (SSNENLEKGGAFLPNQDQNRPSKSLSPLRKTPLSARQKRFEG) are disordered. S417 carries the post-translational modification Phosphoserine. Positions 430–440 (NQDQNRPSKSL) are enriched in polar residues. Phosphoserine is present on S474.

This sequence belongs to the NUR1 family. As to quaternary structure, interacts with CSM1.

It is found in the nucleus membrane. Functionally, member of a perinuclear network that controls recombination at multiple loci to maintain genome stability. Required for rDNA repeat stability. In Saccharomyces cerevisiae (strain Lalvin EC1118 / Prise de mousse) (Baker's yeast), this protein is Nuclear rim protein 1 (NUR1).